We begin with the raw amino-acid sequence, 314 residues long: Signal peptidase I (314 aa).

The chain crosses the membrane as a helical span at residues 5–25 (LTIFLLISTLVTGIFWSFYCI). Over 26–63 (KSFKNYLINKKIINNNNFHQEKIEKSKNKTYFLKSLAS) the chain is Cytoplasmic. The helical transmembrane segment at 64–84 (FFPIFLAIFIIRSFIYEPFQI) threads the bilayer. Residues 85-314 (PSGSMMPTLL…IRINRIGSIH (230 aa)) lie on the Extracellular side of the membrane. Active-site residues include Ser-88 and Lys-143.

Belongs to the peptidase S26 family.

It is found in the cell membrane. The enzyme catalyses Cleavage of hydrophobic, N-terminal signal or leader sequences from secreted and periplasmic proteins.. The polypeptide is Signal peptidase I (lepB) (Buchnera aphidicola subsp. Acyrthosiphon pisum (strain APS) (Acyrthosiphon pisum symbiotic bacterium)).